The following is a 442-amino-acid chain: Histidinol dehydrogenase (442 aa).

Positions 132, 194, and 217 each coordinate NAD(+). Positions 243, 265, and 268 each coordinate substrate. Residues Q265 and H268 each contribute to the Zn(2+) site. Residues E332 and H333 each act as proton acceptor in the active site. 4 residues coordinate substrate: H333, D366, E420, and H425. D366 contacts Zn(2+). H425 provides a ligand contact to Zn(2+).

Belongs to the histidinol dehydrogenase family. The cofactor is Zn(2+).

It catalyses the reaction L-histidinol + 2 NAD(+) + H2O = L-histidine + 2 NADH + 3 H(+). It participates in amino-acid biosynthesis; L-histidine biosynthesis; L-histidine from 5-phospho-alpha-D-ribose 1-diphosphate: step 9/9. Its function is as follows. Catalyzes the sequential NAD-dependent oxidations of L-histidinol to L-histidinaldehyde and then to L-histidine. The protein is Histidinol dehydrogenase of Idiomarina loihiensis (strain ATCC BAA-735 / DSM 15497 / L2-TR).